A 437-amino-acid chain; its full sequence is Elongator complex protein 4 (437 aa).

Positions 179 to 247 are disordered; the sequence is FSKSSSPTTP…TKTGSQDSPL (69 aa). The span at 181–192 shows a compositional bias: polar residues; the sequence is KSSSPTTPSLEQ. S183 is subject to Phosphoserine. Positions 220–237 are enriched in low complexity; that stretch reads SANNNNNNNNNSSSVTSS. S242 carries the phosphoserine modification.

It belongs to the ELP4 family. Component of the elongator complex composed of Elp1, Elp2, Elp3, Elp4, Elp5 and Elp6. The elongator complex associates with and stabilizes microtubules; efficient interaction requires the full complex.

The protein resides in the cytoplasm. It is found in the nucleus. The protein localises to the cytoskeleton. Its subcellular location is the spindle. It participates in tRNA modification; 5-methoxycarbonylmethyl-2-thiouridine-tRNA biosynthesis. In terms of biological role, component of the elongator complex, which is required for multiple tRNA modifications, including mcm5U (5-methoxycarbonylmethyl uridine), mcm5s2U (5-methoxycarbonylmethyl-2-thiouridine), and ncm5U (5-carbamoylmethyl uridine). The elongator complex catalyzes the formation of carboxymethyluridine in the wobble base at position 34 in tRNAs. Binding by the elongator complex stabilizes microtubules and promotes their growth. This induces central spindle asymmetry, promoting polarized signaling endosome trafficking during asymmetric cell division and cell fate assignation of sensory organ precursor cells. This chain is Elongator complex protein 4, found in Drosophila melanogaster (Fruit fly).